Reading from the N-terminus, the 236-residue chain is Purine nucleoside phosphorylase DeoD-type (236 aa).

Histidine 4 serves as a coordination point for a purine D-ribonucleoside. Residues glycine 20, arginine 24, arginine 43, and 87–90 (RVGS) each bind phosphate. A purine D-ribonucleoside-binding positions include 179–181 (EME) and 203–204 (SD). Aspartate 204 serves as the catalytic Proton donor.

This sequence belongs to the PNP/UDP phosphorylase family. As to quaternary structure, homohexamer; trimer of homodimers.

The catalysed reaction is a purine D-ribonucleoside + phosphate = a purine nucleobase + alpha-D-ribose 1-phosphate. It carries out the reaction a purine 2'-deoxy-D-ribonucleoside + phosphate = a purine nucleobase + 2-deoxy-alpha-D-ribose 1-phosphate. Its function is as follows. Catalyzes the reversible phosphorolytic breakdown of the N-glycosidic bond in the beta-(deoxy)ribonucleoside molecules, with the formation of the corresponding free purine bases and pentose-1-phosphate. This is Purine nucleoside phosphorylase DeoD-type from Limosilactobacillus reuteri (strain DSM 20016) (Lactobacillus reuteri).